The primary structure comprises 347 residues: Ileal sodium/bile acid cotransporter (347 aa).

Topologically, residues 1–29 (MSNLTVGCLANATVCEGASCVAPESNFNA) are extracellular. 2 N-linked (GlcNAc...) asparagine glycosylation sites follow: asparagine 3 and asparagine 11. The helical transmembrane segment at 30–50 (ILSVVLSTVLTILLALVMFSM) threads the bilayer. The Cytoplasmic segment spans residues 51–83 (GCNVEIKKFLGHIRRPWGIFIGFLCQFGIMPLT). Residues 84–104 (GFVLAVAFGIMPIQAVVVLIM) form a helical membrane-spanning segment. Residues 105–127 (GCCPGGTASNILAYWVDGDMDLS) are Extracellular-facing. A helical transmembrane segment spans residues 128–148 (VSMTTCSTLLALGMMPLCLYV). The Cytoplasmic portion of the chain corresponds to 149–158 (YTKMWVDSGT). A helical transmembrane segment spans residues 159–179 (IVIPYDNIGTSLVALVVPVSI). Topologically, residues 180–196 (GMFVNHKWPQKAKIILK) are extracellular. Residues 197 to 217 (VGSIAGAVLIVLIAVVGGILY) traverse the membrane as a helical segment. The Cytoplasmic segment spans residues 218–225 (QSAWIIEP). The chain crosses the membrane as a helical span at residues 226–246 (KLWIIGTIFPMAGYSLGFFLA). The Extracellular segment spans residues 247-289 (RIAGQPWYRCRTVALETGMQNTQLCSTIVQLSFSPEDLTYVFT). The chain crosses the membrane as a helical span at residues 290 to 310 (FPLIYSIFQIAFAAIFLGIYV). Residues 311–347 (AYRKCHGKNDAEFPDIKDTKTEPESSFHQMNGGFQPE) lie on the Cytoplasmic side of the membrane. The segment covering 323–335 (FPDIKDTKTEPES) has biased composition (basic and acidic residues). The interval 323–347 (FPDIKDTKTEPESSFHQMNGGFQPE) is disordered. Serine 336 is modified (phosphoserine).

It belongs to the bile acid:sodium symporter (BASS) (TC 2.A.28) family. In terms of assembly, monomer and homodimer.

Its subcellular location is the membrane. It carries out the reaction taurocholate(out) + 2 Na(+)(out) = taurocholate(in) + 2 Na(+)(in). The enzyme catalyses cholate(out) + 2 Na(+)(out) = cholate(in) + 2 Na(+)(in). The catalysed reaction is taurochenodeoxycholate(out) + 2 Na(+)(out) = taurochenodeoxycholate(in) + 2 Na(+)(in). It catalyses the reaction tauroursodeoxycholate(out) + 2 Na(+)(out) = tauroursodeoxycholate(in) + 2 Na(+)(in). It carries out the reaction glycocholate(out) + 2 Na(+)(out) = glycocholate(in) + 2 Na(+)(in). The enzyme catalyses tauronorcholate(out) + 2 Na(+)(out) = tauronorcholate(in) + 2 Na(+)(in). The catalysed reaction is tauroallocholate(out) + 2 Na(+)(out) = tauroallocholate(in) + 2 Na(+)(in). It catalyses the reaction taurodeoxycholate(out) + 2 Na(+)(out) = taurodeoxycholate(in) + 2 Na(+)(in). It carries out the reaction tauro-beta-muricholate(out) + 2 Na(+)(out) = tauro-beta-muricholate(in) + 2 Na(+)(in). Its function is as follows. Plays a critical role in the sodium-dependent reabsorption of bile acids from the lumen of the small intestine. Transports various bile acids, unconjugated or conjugated, such as cholate and taurocholate. Also responsible for bile acid transport in the renal proximal tubules, a salvage mechanism that helps conserve bile acids. Works collaboratively with the Na(+)-taurocholate cotransporting polypeptide (NTCP), the organic solute transporter (OST), and the bile salt export pump (BSEP), to ensure efficacious biological recycling of bile acids during enterohepatic circulation. The chain is Ileal sodium/bile acid cotransporter (SLC10A2) from Oryctolagus cuniculus (Rabbit).